The primary structure comprises 182 residues: Protein transport protein gos1 (182 aa).

Topologically, residues 1–163 (MKSMLLRDSV…RKTSIRRRRD (163 aa)) are cytoplasmic. A helical; Anchor for type IV membrane protein membrane pass occupies residues 164 to 181 (SIILALLISVLMLLFLFF). Residue His182 is a topological domain, vesicular.

The protein belongs to the GOSR1 family. In terms of assembly, component of a SNARE complex consisting of sed5, gos1, ykt6, and sft1.

Its subcellular location is the golgi apparatus membrane. Its function is as follows. Nonessential SNARE involved in retrograde transport within the Golgi complex. This Schizosaccharomyces pombe (strain 972 / ATCC 24843) (Fission yeast) protein is Protein transport protein gos1 (gos1).